A 215-amino-acid chain; its full sequence is NADH-quinone oxidoreductase subunit C (215 aa).

It belongs to the complex I 30 kDa subunit family. As to quaternary structure, NDH-1 is composed of 14 different subunits. Subunits NuoB, C, D, E, F, and G constitute the peripheral sector of the complex.

The protein localises to the cell inner membrane. It catalyses the reaction a quinone + NADH + 5 H(+)(in) = a quinol + NAD(+) + 4 H(+)(out). In terms of biological role, NDH-1 shuttles electrons from NADH, via FMN and iron-sulfur (Fe-S) centers, to quinones in the respiratory chain. The immediate electron acceptor for the enzyme in this species is believed to be ubiquinone. Couples the redox reaction to proton translocation (for every two electrons transferred, four hydrogen ions are translocated across the cytoplasmic membrane), and thus conserves the redox energy in a proton gradient. In Bordetella parapertussis (strain 12822 / ATCC BAA-587 / NCTC 13253), this protein is NADH-quinone oxidoreductase subunit C.